The primary structure comprises 1748 residues: MSARAAAAKSTAMEETAIWEQHTVTLHRAPGFGFGIAISGGRDNPHFQSGETSIVISDVLKGGPAEGQLQENDRVAMVNGVSMDNVEHAFAVQQLRKSGKNAKITIRRKKKVQIPVSRPDPEPVSDNEEDSYDEEIHDPRSGRSGVVNRRSEKIWPRDRSASRERSLSPRSDRRSVASSQPAKPTKVTLVKSRKNEEYGLRLASHIFVKEISQDSLAARDGNIQEGDVVLKINGTVTENMSLTDAKTLIERSKGKLKMVVQRDERATLLNVPDLSDSIHSANASERDDISEIQSLASDHSGRSHDRPPRRSRSRSPDQRSEPSDHSRHSPQQPSNGSLRSRDEERISKPGAVSTPVKHADDHTPKTVEEVTVERNEKQTPSLPEPKPVYAQVGQPDVDLPVSPSDGVLPNSTHEDGILRPSMKLVKFRKGDSVGLRLAGGNDVGIFVAGVLEDSPAAKEGLEEGDQILRVNNVDFTNIIREEAVLFLLDLPKGEEVTILAQKKKDVYRRIVESDVGDSFYIRTHFEYEKESPYGLSFNKGEVFRVVDTLYNGKLGSWLAIRIGKNHKEVERGIIPNKNRAEQLASVQYTLPKTAGGDRADFWRFRGLRSSKRNLRKSREDLSAQPVQTKFPAYERVVLREAGFLRPVTIFGPIADVAREKLAREEPDIYQIAKSEPRDAGTDQRSSGIIRLHTIKQIIDQDKHALLDVTPNAVDRLNYAQWYPIVVFLNPDSKQGVKTMRMRLCPESRKSARKLYERSHKLRKNNHHLFTTTINLNSMNDGWYGALKEAIQQQQNQLVWVSEGKADGATSDDLDLHDDRLSYLSAPGSEYSMYSTDSRHTSDYEDTDTEGGAYTDQELDETLNDEVGTPPESAITRSSEPVREDSSGMHHENQTYPPYSPQAQPQPIHRIDSPGFKPASQQKAEASSPVPYLSPETNPASSTSAVNHNVNLTNVRLEEPTPAPSTSYSPQADSLRTPSTEAAHIMLRDQEPSLSSHVDPTKVYRKDPYPEEMMRQNHVLKQPAVSHPGHRPDKEPNLTYEPQLPYVEKQASRDLEQPTYRYESSSYTDQFSRNYEHRLRYEDRVPMYEEQWSYYDDKQPYPSRPPFDNQHSQDLDSRQHPEESSERGYFPRFEEPAPLSYDSRPRYEQAPRASALRHEEQPAPGYDTHGRLRPEAQPHPSAGPKPAESKQYFEQYSRSYEQVPPQGFTSRAGHFEPLHGAAAVPPLIPSSQHKPEALPSNTKPLPPPPTQTEEEEDPAMKPQSVLTRVKMFENKRSASLETKKDVNDTGSFKPPEVASKPSGAPIIGPKPTSQNQFSEHDKTLYRIPEPQKPQLKPPEDIVRSNHYDPEEDEEYYRKQLSYFDRRSFENKPPAHIAASHLSEPAKPAHSQNQSNFSSYSSKGKPPEADGVDRSFGEKRYEPIQATPPPPPLPSQYAQPSQPVTSASLHIHSKGAHGEGNSVSLDFQNSLVSKPDPPPSQNKPATFRPPNREDTAQAAFYPQKSFPDKAPVNGTEQTQKTVTPAYNRFTPKPYTSSARPFERKFESPKFNHNLLPSETAHKPDLSSKTPTSPKTLVKSHSLAQPPEFDSGVETFSIHAEKPKYQINNISTVPKAIPVSPSAVEEDEDEDGHTVVATARGIFNSNGGVLSSIETGVSIIIPQGAIPEGVEQEIYFKVCRDNSILPPLDKEKGETLLSPLVMCGPHGLKFLKPVELRLPHCDPKTWQNKCLPGDPNYLVGANCVSVLIDHF.

Residues 23-110 (TVTLHRAPGF…NAKITIRRKK (88 aa)) form the PDZ 1 domain. Residues 102 to 112 (AKITIRRKKKV) show a composition bias toward basic residues. A disordered region spans residues 102 to 189 (AKITIRRKKK…QPAKPTKVTL (88 aa)). A compositionally biased stretch (acidic residues) spans 123–136 (PVSDNEEDSYDEEI). Phosphoserine is present on Ser125. Position 132 is a phosphotyrosine (Tyr132). Over residues 149-175 (RRSEKIWPRDRSASRERSLSPRSDRRS) the composition is skewed to basic and acidic residues. A phosphoserine mark is found at Ser175, Ser178, and Ser179. Thr185 carries the phosphothreonine modification. A PDZ 2 domain is found at 186–264 (KVTLVKSRKN…KLKMVVQRDE (79 aa)). 2 positions are modified to phosphoserine: Ser212 and Ser241. Thr267 carries the phosphothreonine modification. Phosphoserine is present on residues Ser275, Ser277, Ser280, Ser284, Ser290, Ser294, Ser297, Ser300, Ser323, Ser329, Ser334, Ser337, and Ser353. A disordered region spans residues 295–396 (LASDHSGRSH…PVYAQVGQPD (102 aa)). Residues 299 to 327 (HSGRSHDRPPRRSRSRSPDQRSEPSDHSR) are compositionally biased toward basic and acidic residues. The segment covering 329-338 (SPQQPSNGSL) has biased composition (polar residues). A Phosphothreonine modification is found at Thr354. The segment covering 357–377 (KHADDHTPKTVEEVTVERNEK) has biased composition (basic and acidic residues). Residues 421-502 (SMKLVKFRKG…GEEVTILAQK (82 aa)) enclose the PDZ 3 domain. An SH3 domain is found at 516–584 (GDSFYIRTHF…PNKNRAEQLA (69 aa)). The Guanylate kinase-like domain occupies 598–779 (RADFWRFRGL…TTTINLNSMN (182 aa)). 2 positions are modified to phosphoserine: Ser617 and Ser622. Positions 633-876 (YERVVLREAG…GTPPESAITR (244 aa)) are occludin (OCLN)-binding region. Phosphothreonine is present on Thr809. Residues Ser810 and Ser821 each carry the phosphoserine modification. Tyr822 is modified (phosphotyrosine). Phosphoserine is present on residues Ser824, Ser828, and Ser837. Disordered regions lie at residues 825–1081 (APGS…LRYE) and 1095–1587 (DDKQ…PEFD). Phosphothreonine occurs at positions 846, 848, 854, 861, and 868. Positions 879–892 (EPVREDSSGMHHEN) are enriched in basic and acidic residues. Positions 893–906 (QTYPPYSPQAQPQP) are enriched in low complexity. Ser912 is modified (phosphoserine). Polar residues-rich tracts occupy residues 934–953 (PETN…NLTN) and 963–979 (PSTS…TPST). Phosphoserine is present on Ser968. Basic and acidic residues predominate over residues 998-1014 (DPTKVYRKDPYPEEMMR). The span at 1061–1072 (YESSSYTDQFSR) shows a compositional bias: polar residues. 3 positions are modified to phosphoserine: Ser1071, Ser1111, and Ser1139. The span at 1110-1125 (HSQDLDSRQHPEESSE) shows a compositional bias: basic and acidic residues. Phosphotyrosine occurs at positions 1140 and 1165. Residues 1151 to 1371 (RASALRHEEQ…FDRRSFENKP (221 aa)) are actin-binding region (ABR). Basic and acidic residues-rich tracts occupy residues 1269–1286 (KMFE…KDVN) and 1336–1347 (PPEDIVRSNHYD). The residue at position 1354 (Tyr1354) is a Phosphotyrosine. Ser1366 carries the phosphoserine modification. Low complexity predominate over residues 1389-1400 (SQNQSNFSSYSS). Over residues 1403–1420 (KPPEADGVDRSFGEKRYE) the composition is skewed to basic and acidic residues. Position 1413 is a phosphoserine (Ser1413). 2 stretches are compositionally biased toward polar residues: residues 1459–1470 (NSVSLDFQNSLV) and 1512–1522 (GTEQTQKTVTP). A compositionally biased stretch (basic and acidic residues) spans 1538 to 1547 (PFERKFESPK). 2 positions are modified to phosphoserine: Ser1545 and Ser1617. The 115-residue stretch at 1634 to 1748 (ATARGIFNSN…NCVSVLIDHF (115 aa)) folds into the ZU5 domain.

This sequence belongs to the MAGUK family. In terms of assembly, homodimer. Forms heterodimers TJP3. Forms a heterodimer (via PDZ2 domain) with TJP2/ZO2 (via PDZ2 domain). Interacts with OCLN, CALM, claudins, CGN/cingulin, CXADR, GJA12, GJD3 and UBN1. Interacts (via ZU5 domain) with CDC42BPB and MYZAP. Interacts (via PDZ domain) with GJA1. Interacts (via PDZ domains) with ANKRD2. Interacts with POPDC1 (via the C-terminus cytoplasmic tail). Interacts with HSPA4 and KIRREL1. Interacts with DLL1. Interacts with USP53 (via the C-terminal region). Interacts (via ABR region) with F-actin. Interacts with DNMBP (via C-terminal domain); required for the apical cell-cell junction localization of DNMBP. Interacts with SPEF1. Interacts (via N-terminus) with CTNNA1. Interacts with CLDN18. Interacts with CLDN16 (via TRV motif); this is a prerequisite for anchoring of CLDN16 at the tight junction. Interacts with PKP1; the interaction facilitates TJP1/ZO-1 localization to the plasma membrane. Interacts with PATJ (via PDZ1-6 domains); the interaction is required for attachment and extension of TJP1/ZO1 condensates along the apical cell interface. Post-translationally, phosphorylated at tyrosine redidues in response to epidermal growth factor (EGF). This response is dependent on an intact actin microfilament system. Dephosphorylated by PTPRJ. The alpha-containing isoform is found in most epithelial cell junctions. The short isoform is found both in endothelial cells and the highly specialized epithelial junctions of renal glomeruli and Sertoli cells of the seminiferous tubules.

It is found in the cell membrane. The protein localises to the cell junction. The protein resides in the tight junction. Its subcellular location is the gap junction. It localises to the cell projection. It is found in the podosome. Functionally, TJP1, TJP2, and TJP3 are closely related scaffolding proteins that link tight junction (TJ) transmembrane proteins such as claudins, junctional adhesion molecules, and occludin to the actin cytoskeleton. Forms a multistranded TJP1/ZO1 condensate which elongates to form a tight junction belt, the belt is anchored at the apical cell membrane via interaction with PATJ. The tight junction acts to limit movement of substances through the paracellular space and as a boundary between the compositionally distinct apical and basolateral plasma membrane domains of epithelial and endothelial cells. Necessary for lumenogenesis, and particularly efficient epithelial polarization and barrier formation. Plays a role in the regulation of cell migration by targeting CDC42BPB to the leading edge of migrating cells. Plays an important role in podosome formation and associated function, thus regulating cell adhesion and matrix remodeling. With TJP2 and TJP3, participates in the junctional retention and stability of the transcription factor DBPA, but is not involved in its shuttling to the nucleus. May play a role in mediating cell morphology changes during ameloblast differentiation via its role in tight junctions. This is Tight junction protein 1 from Homo sapiens (Human).